The primary structure comprises 496 residues: Xylulose kinase (496 aa).

Residue 83 to 84 (MH) coordinates substrate. Asp237 serves as the catalytic Proton acceptor.

Belongs to the FGGY kinase family.

The catalysed reaction is D-xylulose + ATP = D-xylulose 5-phosphate + ADP + H(+). Catalyzes the phosphorylation of D-xylulose to D-xylulose 5-phosphate. This Staphylococcus epidermidis (strain ATCC 35984 / DSM 28319 / BCRC 17069 / CCUG 31568 / BM 3577 / RP62A) protein is Xylulose kinase.